The chain runs to 185 residues: MIEASKLKAGMTFEAEGKLIRVLEASHHKPGKGNTIMRMKLRDVRTGSTFDTTYRPDEKFEQAIIETVPAQYLYKMDDTAYFMNTDTYDQYEIPVANVEQELLYILENSNVKIQFYGSEVIGVTVPTTVELTVAETQPSIKGATVTGSGKPATLETGLVVNVPDFIEAGQKLIINTAEGTYVSRA.

The protein belongs to the elongation factor P family.

It localises to the cytoplasm. It functions in the pathway protein biosynthesis; polypeptide chain elongation. In terms of biological role, involved in peptide bond synthesis. Stimulates efficient translation and peptide-bond synthesis on native or reconstituted 70S ribosomes in vitro. Probably functions indirectly by altering the affinity of the ribosome for aminoacyl-tRNA, thus increasing their reactivity as acceptors for peptidyl transferase. The protein is Elongation factor P of Streptococcus pyogenes serotype M49 (strain NZ131).